Here is a 185-residue protein sequence, read N- to C-terminus: Prenylated Rab acceptor protein 1 (185 aa).

The Cytoplasmic segment spans residues Met-1–Tyr-78. The required for interaction with prenylated RAB3A and VAMP2 stretch occupies residues Ala-30–Phe-54. 2 helical membrane-spanning segments follow: residues Val-79–Pro-94 and Met-95–Leu-112. The Cytoplasmic portion of the chain corresponds to Arg-113–Gln-131. The next 2 membrane-spanning stretches (helical) occupy residues Tyr-132 to Ala-148 and Gly-149 to Ser-165. The segment at Ser-165 to Val-185 is required for interaction with GDI1. Topologically, residues His-166–Val-185 are cytoplasmic. Residues Val-175–Val-185 are required for interaction with prenylated RAB3A and VAMP2. Residues Val-175–Val-185 form a homodimerization region.

Belongs to the PRA1 family. As to quaternary structure, homodimer. Interacts with VAMP2 (synaptobrevin-2), prenylated Rab proteins, GDI1, NDRG1 and PCLO.

The protein localises to the cell membrane. The protein resides in the cytoplasm. It localises to the golgi apparatus. Its subcellular location is the cytoplasmic vesicle. It is found in the secretory vesicle. The protein localises to the synaptic vesicle. General Rab protein regulator required for vesicle formation from the Golgi complex. May control vesicle docking and fusion by mediating the action of Rab GTPases to the SNARE complexes. In addition it inhibits the removal of Rab GTPases from the membrane by GDI1. The chain is Prenylated Rab acceptor protein 1 (RABAC1) from Canis lupus familiaris (Dog).